The following is a 500-amino-acid chain: Adenylosuccinate synthetase, chloroplastic (500 aa).

GTP is bound by residues 87-93 (GDEGKGK) and 115-117 (GHT). Residue Asp-88 is the Proton acceptor of the active site. Residues Asp-88 and Gly-115 each contribute to the Mg(2+) site. Residues 88–91 (DEGK), 113–116 (NAGH), Thr-205, Arg-219, Gln-299, Thr-314, and Arg-378 contribute to the IMP site. His-116 functions as the Proton donor in the catalytic mechanism. A substrate-binding site is contributed by 374-380 (TTTGRPR). Residues Arg-380, 406-408 (KLD), and 489-491 (GIG) each bind GTP.

Belongs to the adenylosuccinate synthetase family. As to quaternary structure, homodimer. Mg(2+) serves as cofactor.

It localises to the plastid. The protein localises to the chloroplast. The catalysed reaction is IMP + L-aspartate + GTP = N(6)-(1,2-dicarboxyethyl)-AMP + GDP + phosphate + 2 H(+). It participates in purine metabolism; AMP biosynthesis via de novo pathway; AMP from IMP: step 1/2. Plays an important role in the de novo pathway and in the salvage pathway of purine nucleotide biosynthesis. Catalyzes the first committed step in the biosynthesis of AMP from IMP. The chain is Adenylosuccinate synthetase, chloroplastic from Solanum bulbocastanum (Wild potato).